The chain runs to 640 residues: Threonine--tRNA ligase (640 aa).

Residues 1-63 (MSSVTVTLPD…SEDCEIEIVT (63 aa)) enclose the TGS domain. Positions 242–533 (DHRKLGREMD…LIEHYNGRFP (292 aa)) are catalytic. Residues C334, H385, and H510 each coordinate Zn(2+).

This sequence belongs to the class-II aminoacyl-tRNA synthetase family. Homodimer. The cofactor is Zn(2+).

It is found in the cytoplasm. The catalysed reaction is tRNA(Thr) + L-threonine + ATP = L-threonyl-tRNA(Thr) + AMP + diphosphate + H(+). Catalyzes the attachment of threonine to tRNA(Thr) in a two-step reaction: L-threonine is first activated by ATP to form Thr-AMP and then transferred to the acceptor end of tRNA(Thr). The protein is Threonine--tRNA ligase of Halobacterium salinarum (strain ATCC 29341 / DSM 671 / R1).